A 114-amino-acid chain; its full sequence is Aspartate 1-decarboxylase (114 aa).

The active-site Schiff-base intermediate with substrate; via pyruvic acid is the serine 25. Serine 25 carries the pyruvic acid (Ser) modification. Threonine 57 contacts substrate. Tyrosine 58 (proton donor) is an active-site residue. 73–75 (GAA) serves as a coordination point for substrate.

The protein belongs to the PanD family. Heterooctamer of four alpha and four beta subunits. Pyruvate is required as a cofactor. Is synthesized initially as an inactive proenzyme, which is activated by self-cleavage at a specific serine bond to produce a beta-subunit with a hydroxyl group at its C-terminus and an alpha-subunit with a pyruvoyl group at its N-terminus.

It is found in the cytoplasm. The catalysed reaction is L-aspartate + H(+) = beta-alanine + CO2. Its pathway is cofactor biosynthesis; (R)-pantothenate biosynthesis; beta-alanine from L-aspartate: step 1/1. Catalyzes the pyruvoyl-dependent decarboxylation of aspartate to produce beta-alanine. The polypeptide is Aspartate 1-decarboxylase (Thermotoga petrophila (strain ATCC BAA-488 / DSM 13995 / JCM 10881 / RKU-1)).